Consider the following 131-residue polypeptide: Glycine cleavage system H protein (131 aa).

The Lipoyl-binding domain occupies 24-106; sequence VYCVGITEHA…YTDGWLFKIK (83 aa). K65 carries the N6-lipoyllysine modification.

This sequence belongs to the GcvH family. As to quaternary structure, the glycine cleavage system is composed of four proteins: P, T, L and H. Requires (R)-lipoate as cofactor.

Its function is as follows. The glycine cleavage system catalyzes the degradation of glycine. The H protein shuttles the methylamine group of glycine from the P protein to the T protein. This is Glycine cleavage system H protein from Sodalis glossinidius (strain morsitans).